The primary structure comprises 157 residues: Phosphopantetheine adenylyltransferase (157 aa).

Residue T8 coordinates substrate. ATP contacts are provided by residues 8–9 (TF) and H16. K40, T72, and R86 together coordinate substrate. ATP is bound by residues 87–89 (GLR), E97, and 122–128 (YSFLSSS).

This sequence belongs to the bacterial CoaD family. Homohexamer. Mg(2+) serves as cofactor.

It is found in the cytoplasm. The enzyme catalyses (R)-4'-phosphopantetheine + ATP + H(+) = 3'-dephospho-CoA + diphosphate. It participates in cofactor biosynthesis; coenzyme A biosynthesis; CoA from (R)-pantothenate: step 4/5. Its function is as follows. Reversibly transfers an adenylyl group from ATP to 4'-phosphopantetheine, yielding dephospho-CoA (dPCoA) and pyrophosphate. The chain is Phosphopantetheine adenylyltransferase from Prochlorococcus marinus (strain AS9601).